The chain runs to 320 residues: Olfactory receptor 51E2 (320 aa).

Residues 1 to 24 (MSSCNFTHATFMLIGIPGLEEAHF) are Extracellular-facing. The N-linked (GlcNAc...) asparagine glycan is linked to asparagine 5. The helical transmembrane segment at 25–45 (WFGFPLLSMYAVALFGNCIVV) threads the bilayer. At 46–53 (FIVRTERS) the chain is on the cytoplasmic side. A helical transmembrane segment spans residues 54–74 (LHAPMYLFLCMLAAIDLALST). Residues 75–98 (STMPKILALFWFDSREITFDACLA) are Extracellular-facing. Cysteine 96 and cysteine 178 form a disulfide bridge. Residues 99–119 (QMFFIHALSAIESTILLAMAF) traverse the membrane as a helical segment. The Cytoplasmic portion of the chain corresponds to 120 to 138 (DRYVAICHPLRHAAVLNNT). The chain crosses the membrane as a helical span at residues 139 to 159 (VTVQIGMVALVRGSLFFFPLP). Residues 160-195 (LLIKRLAFCHSNVLSHSYCVHQDVMKLAYTDTLPNV) are Extracellular-facing. A helical transmembrane segment spans residues 196–216 (VYGLTAILLVMGVDVMFISLS). Over 217-236 (YFLIIRAVLQLPSKSERAKA) the chain is Cytoplasmic. A helical membrane pass occupies residues 237-257 (FGTCVSHIGVVLAFYVPLIGL). The Extracellular portion of the chain corresponds to 258-272 (SVVHRFGNSLDPIVH). The chain crosses the membrane as a helical span at residues 273-293 (VLMGDVYLLLPPVINPIIYGA). The Cytoplasmic segment spans residues 294-320 (KTKQIRTRVLAMFKISCDKDIEAGGNT).

It belongs to the G-protein coupled receptor 1 family. As to expression, expressed in brain and liver. Expressed only in some areas of the brain and in the olfactory epithelium.

The protein localises to the cell membrane. It localises to the early endosome membrane. Functionally, olfactory receptor. The activity of this receptor is probably mediated by G-proteins which induce elevation of intracellular Ca(2+), cAMP and activation of phosphorylation of the protein kinases PKA and MAPK3/MAPK1. Activation of OR51E2 may affect melanocyte proliferation, differentiation, and melanogenesis and may increase proliferation and migration of primary retinal pigment epithelial (RPE) cells. Activated by the short chain fatty acids (SCFA), acetate and propionate. In response to SCFA, may positively regulate renin secretion and increase blood pressure. May also be activated by steroid hormones and regulate cell proliferation. Activated by L-lactate in glomus cells. The sequence is that of Olfactory receptor 51E2 (Or51e2) from Rattus norvegicus (Rat).